Consider the following 205-residue polypeptide: Non-specific lipid transfer protein GPI-anchored 13 (205 aa).

An N-terminal signal peptide occupies residues 1 to 24 (MESRKIKVMATAIALIMVAMVVDA). Intrachain disulfides connect cysteine 36/cysteine 77, cysteine 46/cysteine 61, cysteine 62/cysteine 104, and cysteine 75/cysteine 113. Residues asparagine 93, asparagine 137, and asparagine 165 are each glycosylated (N-linked (GlcNAc...) asparagine). The disordered stretch occupies residues 141–176 (SASAPTGSASEPTSMSSTPGSSAGNNSGRTTSVPGT). A lipid anchor (GPI-anchor amidated asparagine) is attached at asparagine 177. A propeptide spans 178 to 205 (HAQSFSKQWLGLEVVAHFFVIFYIFILV) (removed in mature form).

Belongs to the plant LTP family. As to expression, expressed preferentially in expanding leaves and sepals, restricted to the distal side. Expressed at low levels in roots and stems.

The protein localises to the cell membrane. Probable lipid transfer protein. The chain is Non-specific lipid transfer protein GPI-anchored 13 from Arabidopsis thaliana (Mouse-ear cress).